A 274-amino-acid polypeptide reads, in one-letter code: MDPSLLLDQMLQDVSNLPAEFRYMLEEVGLEDEQCLELRKRYQQKEGILHKYIKQNGSLAANPKEDELLAEVEQSMAQVRELQEEKCQRANTILFLVSRHLNKLQQNIIMLEEDGLLAPAEDEMESGPDFSRESSVVGSTVSERKRKAASEDHPRRKKQSRSMSNTHREKSYNKGDDTADVKSPASTEREGTLDLQNYQEELFSSMNDNEKEDQNLYCFCQRVSFGEMVACDGPNCKYEWFHYECVNLTEPPKGTWYCPDCKQEMSKKLKKKKQ.

The segment at 121-194 (EDEMESGPDF…ASTEREGTLD (74 aa)) is disordered. Residues 166 to 180 (THREKSYNKGDDTAD) show a composition bias toward basic and acidic residues. Residues 215-264 (NLYCFCQRVSFGEMVACDGPNCKYEWFHYECVNLTEPPKGTWYCPDCKQE) form a PHD-type zinc finger. Positions 218, 220, 231, 236, 242, 245, 258, and 261 each coordinate Zn(2+).

Belongs to the ING family. In terms of assembly, interacts with H3K4me3 and to a lesser extent with H3K4me2. Component of the NuA4 histone acetyltransferase complex.

It localises to the nucleus. Functionally, component of the NuA4 histone acetyltransferase complex which is involved in transcriptional activation of selected genes principally by acetylation of nucleosomal histone H4 and H2A. The NuA4 complex is also involved in DNA repair. Involved in cell cycle progression and meiosis. The polypeptide is Chromatin modification-related protein YNG2 (YNG2) (Candida glabrata (strain ATCC 2001 / BCRC 20586 / JCM 3761 / NBRC 0622 / NRRL Y-65 / CBS 138) (Yeast)).